Reading from the N-terminus, the 808-residue chain is TBC1 domain family member 10B (808 aa).

Disordered stretches follow at residues 1–38 (METG…VVAP), 60–225 (PAWV…GTCE), and 237–264 (PEPA…GQAP). Serine 22 carries the phosphoserine modification. The segment covering 27-38 (GSRAGPVVVVAP) has biased composition (low complexity). Over residues 100 to 112 (APKPQLPSGPESP) the composition is skewed to pro residues. Position 141 is a phosphoserine (serine 141). The segment covering 149–178 (PTGTPTRTPSRTAPGALTAKPPLAPKPGTT) has biased composition (low complexity). Threonine 152 carries the post-translational modification Phosphothreonine. The segment covering 179 to 189 (VASGVTARSAS) has biased composition (polar residues). Omega-N-methylarginine is present on arginine 186. Positions 198-209 (AAAATSASAGQA) are enriched in low complexity. Residues 242–252 (NSQDLGSTSSL) are compositionally biased toward polar residues. A Rab-GAP TBC domain is found at 360-548 (GIPSSLRAKA…RVWDMFFCEG (189 aa)). Residues 629-808 (QYRPSRRLHG…SAEARQDAYF (180 aa)) are disordered. Over residues 655–676 (PSSSLLSLPGLKSRGSRAAGGA) the composition is skewed to low complexity. Phosphoserine is present on residues serine 658, serine 661, serine 678, and serine 687. Residues 684–696 (RRASAGPAPGPVV) are compositionally biased toward low complexity. Over residues 707–718 (SPTGNSTPLGSS) the composition is skewed to polar residues. A coiled-coil region spans residues 716–782 (GSSKETRKQE…KAQGRKLSLR (67 aa)). 2 stretches are compositionally biased toward basic and acidic residues: residues 719 to 774 (KETR…EKKA) and 793 to 808 (DGGD…DAYF).

Its subcellular location is the cytoplasm. The protein resides in the cell membrane. Acts as a GTPase-activating protein for RAB3A, RAB22A, RAB27A, and RAB35. Does not act on RAB2A and RAB6A. The sequence is that of TBC1 domain family member 10B (TBC1D10B) from Homo sapiens (Human).